Here is a 397-residue protein sequence, read N- to C-terminus: Succinyl-diaminopimelate desuccinylase (397 aa).

Histidine 73 serves as a coordination point for Zn(2+). Aspartate 75 is a catalytic residue. Aspartate 106 contacts Zn(2+). The active-site Proton acceptor is glutamate 140. Glutamate 141, glutamate 169, and histidine 366 together coordinate Zn(2+).

The protein belongs to the peptidase M20A family. DapE subfamily. As to quaternary structure, homodimer. Requires Zn(2+) as cofactor. Co(2+) serves as cofactor.

It catalyses the reaction N-succinyl-(2S,6S)-2,6-diaminopimelate + H2O = (2S,6S)-2,6-diaminopimelate + succinate. It functions in the pathway amino-acid biosynthesis; L-lysine biosynthesis via DAP pathway; LL-2,6-diaminopimelate from (S)-tetrahydrodipicolinate (succinylase route): step 3/3. Functionally, catalyzes the hydrolysis of N-succinyl-L,L-diaminopimelic acid (SDAP), forming succinate and LL-2,6-diaminopimelate (DAP), an intermediate involved in the bacterial biosynthesis of lysine and meso-diaminopimelic acid, an essential component of bacterial cell walls. The chain is Succinyl-diaminopimelate desuccinylase from Rhizobium leguminosarum bv. trifolii (strain WSM2304).